The primary structure comprises 88 residues: DNA-directed RNA polymerase subunit omega (88 aa).

This sequence belongs to the RNA polymerase subunit omega family. The RNAP catalytic core consists of 2 alpha, 1 beta, 1 beta' and 1 omega subunit. When a sigma factor is associated with the core the holoenzyme is formed, which can initiate transcription.

It carries out the reaction RNA(n) + a ribonucleoside 5'-triphosphate = RNA(n+1) + diphosphate. Functionally, promotes RNA polymerase assembly. Latches the N- and C-terminal regions of the beta' subunit thereby facilitating its interaction with the beta and alpha subunits. This Yersinia pestis (strain Pestoides F) protein is DNA-directed RNA polymerase subunit omega.